The primary structure comprises 95 residues: L-amino-acid oxidase (95 aa).

This sequence belongs to the flavin monoamine oxidase family. FIG1 subfamily. Homodimer; non-covalently linked. Requires FAD as cofactor. In terms of processing, N-glycosylated. Expressed by the venom gland.

The protein localises to the secreted. It catalyses the reaction an L-alpha-amino acid + O2 + H2O = a 2-oxocarboxylate + H2O2 + NH4(+). The catalysed reaction is L-leucine + O2 + H2O = 4-methyl-2-oxopentanoate + H2O2 + NH4(+). The enzyme catalyses L-phenylalanine + O2 + H2O = 3-phenylpyruvate + H2O2 + NH4(+). It carries out the reaction L-tryptophan + O2 + H2O = indole-3-pyruvate + H2O2 + NH4(+). It catalyses the reaction L-methionine + O2 + H2O = 4-methylsulfanyl-2-oxobutanoate + H2O2 + NH4(+). The catalysed reaction is L-arginine + O2 + H2O = 5-guanidino-2-oxopentanoate + H2O2 + NH4(+). Its function is as follows. Catalyzes an oxidative deamination of predominantly hydrophobic and aromatic L-amino acids, thus producing hydrogen peroxide that may contribute to the diverse toxic effects of this enzyme. Is highly active on L-Met, L-Leu, L-Phe, L-Trp, and L-Arg, and no weakly or no active on L-His, L-Tyr, L-Ile, L-Gln, and L-Lys. Exhibits diverse biological activities, such as antibacterial activity against both Gram-positive (B.subtilis) and Gram-negative (E.coli) bacteria, and inhibition of ADP- or collagen-induced platelet aggregation. Effects of snake L-amino oxidases on platelets are controversial, since they either induce aggregation or inhibit agonist-induced aggregation. These different effects are probably due to different experimental conditions. This protein may also induce hemorrhage, hemolysis, edema, apoptosis, and have antiparasitic activities. The polypeptide is L-amino-acid oxidase (Naja oxiana (Central Asian cobra)).